A 99-amino-acid chain; its full sequence is Ragulator complex protein LAMTOR4 (99 aa).

At Met1 the chain carries N-acetylmethionine. Thr2 is modified (N-acetylthreonine; in Ragulator complex protein LAMTOR4, N-terminally processed). Ser67 bears the Phosphoserine; by PKA mark.

This sequence belongs to the LAMTOR4 family. Part of the Ragulator complex composed of LAMTOR1, LAMTOR2, LAMTOR3, LAMTOR4 and LAMTOR5. LAMTOR4 and LAMTOR5 form a heterodimer that interacts, through LAMTOR1, with a LAMTOR2, LAMTOR3 heterodimer. The Ragulator complex interacts with both the mTORC1 complex and heterodimers constituted of the Rag GTPases RagA/RRAGA, RagB/RRAGB, RagC/RRAGC and RagD/RRAGD; regulated by amino acid availability. The Ragulator complex interacts with SLC38A9; the probable amino acid sensor. Component of the lysosomal folliculin complex (LFC), composed of FLCN, FNIP1 (or FNIP2), RagA/RRAGA or RagB/RRAGB GDP-bound, RagC/RRAGC or RagD/RRAGD GTP-bound, and Ragulator. Phosphorylation at Ser-67 by PKA inhibits Ragulator complex assembly.

The protein resides in the lysosome. Functionally, as part of the Ragulator complex it is involved in amino acid sensing and activation of mTORC1, a signaling complex promoting cell growth in response to growth factors, energy levels, and amino acids. Activated by amino acids through a mechanism involving the lysosomal V-ATPase, the Ragulator plays a dual role for the small GTPases Rag (RagA/RRAGA, RagB/RRAGB, RagC/RRAGC and/or RagD/RRAGD): it (1) acts as a guanine nucleotide exchange factor (GEF), activating the small GTPases Rag and (2) mediates recruitment of Rag GTPases to the lysosome membrane. Activated Ragulator and Rag GTPases function as a scaffold recruiting mTORC1 to lysosomes where it is in turn activated. This Homo sapiens (Human) protein is Ragulator complex protein LAMTOR4.